Reading from the N-terminus, the 319-residue chain is Methionyl-tRNA formyltransferase (319 aa).

113-116 provides a ligand contact to (6S)-5,6,7,8-tetrahydrofolate; the sequence is SLLP.

Belongs to the Fmt family.

It catalyses the reaction L-methionyl-tRNA(fMet) + (6R)-10-formyltetrahydrofolate = N-formyl-L-methionyl-tRNA(fMet) + (6S)-5,6,7,8-tetrahydrofolate + H(+). Its function is as follows. Attaches a formyl group to the free amino group of methionyl-tRNA(fMet). The formyl group appears to play a dual role in the initiator identity of N-formylmethionyl-tRNA by promoting its recognition by IF2 and preventing the misappropriation of this tRNA by the elongation apparatus. This chain is Methionyl-tRNA formyltransferase, found in Hamiltonella defensa subsp. Acyrthosiphon pisum (strain 5AT).